We begin with the raw amino-acid sequence, 472 residues long: MTRNKPPSLFKTRHAAQVHFVGLGGIGMSGIAEVLLNLGYRVSGSDLRESDITRRLVRMGATFFEGHRAQNLIQADVVVISSAVRKDNPEVVAARQRKIPVIPRAEMLAELMRLKYAVAVAGSHGKTTTTSMVATVLSAAGLDPTAVVGGKVNVLDSNAKLGKSELMVVEADESDGSFLHLHPSIAIVTNIDPEHMDHYGDLDTLQSAFVEFCNRVPFYGLNVLCLDNPNVQALLPRIEKRFVTYGSSHMADYRLENIQLDGFTTRFNAYRREESLGEFRVRMVGAHNAFNALAVIAVAEEMDIPLETVRESLAEFGGVQRRFTVRGEAQGITVVDDYGHHPTEVLATLAGARRAFGRRVVVAFQPHRYTRTHDLMKEFTTSFNDSDVLFVTSVYAAGEERIHGATGDALADAVRAHGHRDVTFVEKRTDLPAALLPRLREGDLVLTLGAGDITHVGPELLELLRTTPLAKD.

ATP is bound at residue Gly122–Thr128.

It belongs to the MurCDEF family.

Its subcellular location is the cytoplasm. It catalyses the reaction UDP-N-acetyl-alpha-D-muramate + L-alanine + ATP = UDP-N-acetyl-alpha-D-muramoyl-L-alanine + ADP + phosphate + H(+). Its pathway is cell wall biogenesis; peptidoglycan biosynthesis. Cell wall formation. This chain is UDP-N-acetylmuramate--L-alanine ligase, found in Myxococcus xanthus (strain DK1622).